The sequence spans 419 residues: Oligouridylate-binding protein 1B (419 aa).

2 RRM domains span residues 54-128 (RSVY…WAYA) and 139-217 (FNIF…WATK). A disordered region spans residues 217–257 (KGATSGEDKQSSDSKSVVELTSGVSEDGKDTTNGEAPENNA). Ser-241 is modified (phosphoserine). An RRM 3 domain is found at 260–335 (TTVYVGNLAP…RQMKCSWGSK (76 aa)).

Interacts with UBA1A and UBA2A.

The protein resides in the nucleus. In terms of biological role, heterogeneous nuclear ribonucleoprotein (hnRNP)-like protein that acts as a component of the pre-mRNA processing machinery. Functions to facilitate the nuclear maturation of plant pre-mRNAs. This is Oligouridylate-binding protein 1B (UBP1B) from Arabidopsis thaliana (Mouse-ear cress).